The primary structure comprises 179 residues: Large ribosomal subunit protein uL5 (179 aa).

It belongs to the universal ribosomal protein uL5 family. As to quaternary structure, part of the 50S ribosomal subunit; part of the 5S rRNA/L5/L18/L25 subcomplex. Contacts the 5S rRNA and the P site tRNA. Forms a bridge to the 30S subunit in the 70S ribosome.

This is one of the proteins that bind and probably mediate the attachment of the 5S RNA into the large ribosomal subunit, where it forms part of the central protuberance. In the 70S ribosome it contacts protein S13 of the 30S subunit (bridge B1b), connecting the 2 subunits; this bridge is implicated in subunit movement. Contacts the P site tRNA; the 5S rRNA and some of its associated proteins might help stabilize positioning of ribosome-bound tRNAs. In Prochlorococcus marinus (strain MIT 9303), this protein is Large ribosomal subunit protein uL5.